Consider the following 257-residue polypeptide: uncharacterized protein (257 aa).

Disordered stretches follow at residues 1–164 and 225–257; these read MERS…AGAC and TAWSGACGAGPTAATAAQPGKPRSAAAPGRARA. Residues 10–28 are compositionally biased toward basic and acidic residues; that stretch reads CGEEPRSGSRRLPKAEGDK. Basic residues predominate over residues 54–65; the sequence is RPNRASGRRRRS. Residues 125–139 are compositionally biased toward pro residues; it reads RPTPRPCAGPAPPPA. Residues 144-162 show a composition bias toward basic residues; the sequence is RCRRPRRWPRAGRRGRRAG.

This is an uncharacterized protein from Homo sapiens (Human).